Consider the following 418-residue polypeptide: 3-phosphoshikimate 1-carboxyvinyltransferase (418 aa).

3-phosphoshikimate contacts are provided by lysine 26, serine 27, and arginine 31. Lysine 26 is a binding site for phosphoenolpyruvate. Residues glycine 97 and arginine 125 each coordinate phosphoenolpyruvate. Serine 170, serine 171, glutamine 172, aspartate 297, asparagine 320, and lysine 324 together coordinate 3-phosphoshikimate. Position 172 (glutamine 172) interacts with phosphoenolpyruvate. Aspartate 297 acts as the Proton acceptor in catalysis. Phosphoenolpyruvate-binding residues include arginine 328, arginine 375, and lysine 400.

It belongs to the EPSP synthase family. Monomer.

The protein localises to the cytoplasm. The enzyme catalyses 3-phosphoshikimate + phosphoenolpyruvate = 5-O-(1-carboxyvinyl)-3-phosphoshikimate + phosphate. It participates in metabolic intermediate biosynthesis; chorismate biosynthesis; chorismate from D-erythrose 4-phosphate and phosphoenolpyruvate: step 6/7. Catalyzes the transfer of the enolpyruvyl moiety of phosphoenolpyruvate (PEP) to the 5-hydroxyl of shikimate-3-phosphate (S3P) to produce enolpyruvyl shikimate-3-phosphate and inorganic phosphate. The sequence is that of 3-phosphoshikimate 1-carboxyvinyltransferase from Pseudomonas savastanoi pv. phaseolicola (strain 1448A / Race 6) (Pseudomonas syringae pv. phaseolicola (strain 1448A / Race 6)).